A 415-amino-acid chain; its full sequence is Adipocyte plasma membrane-associated protein (415 aa).

Residues 1–29 (MSEADGLRQRRPLRPQVVTDDGQVPEVKE) are disordered. Ser-2 is subject to N-acetylserine. The Cytoplasmic segment spans residues 2–39 (SEADGLRQRRPLRPQVVTDDGQVPEVKEGSSFSGRVFR). The residue at position 19 (Thr-19) is a Phosphothreonine. A helical; Signal-anchor for type II membrane protein membrane pass occupies residues 40–60 (MTFLMLAVSLAIPLLGAMMLL). Residues 61–415 (ESPIDPQSFS…FICRLSLQSI (355 aa)) are Extracellular-facing. N-linked (GlcNAc...) asparagine glycosylation is present at Asn-159.

This sequence belongs to the strictosidine synthase family. Post-translationally, glycosylated in vitro. Strongly expressed in adipose tissue. Highly expressed in liver, heart, and kidney. Expressed at intermediate level in brain and lung. Weakly expressed in spleen, skeletal muscle and testis.

The protein resides in the membrane. Exhibits strong arylesterase activity with beta-naphthyl acetate and phenyl acetate. May play a role in adipocyte differentiation. The polypeptide is Adipocyte plasma membrane-associated protein (Apmap) (Mus musculus (Mouse)).